A 563-amino-acid polypeptide reads, in one-letter code: Lipase 2 (563 aa).

Residues 1-19 form the signal peptide; sequence MVSKSLFLAAAVNLAGVLA. Residue Gln-20 is modified to Pyrrolidone carboxylic acid. A disulfide bridge links Cys-80 with Cys-124. The active-site Acyl-ester intermediate is Ser-236. Cys-295 and Cys-307 are joined by a disulfide. N-linked (GlcNAc...) asparagine glycosylation occurs at Asn-302. Glu-373 acts as the Charge relay system in catalysis. Asn-383 carries an N-linked (GlcNAc...) asparagine glycan. The Charge relay system role is filled by His-482.

The protein belongs to the type-B carboxylesterase/lipase family. As to quaternary structure, monomer.

The protein localises to the secreted. It catalyses the reaction a triacylglycerol + H2O = a diacylglycerol + a fatty acid + H(+). Functionally, hydrolyzes all ester bonds in triglyceride and displays a high affinity for triolein. For unsaturated substrates having long fatty acyl chains (C18:2 cis-9, cis-12 and C18:3 cis-9, cis-12, cis-15) GCL I shows higher specific activity than GCL II, whereas GCL II shows higher specific activity against saturated substrates having short fatty acid chains (C8, C10, C12 and C14). The sequence is that of Lipase 2 (LIP2) from Geotrichum candidum (Oospora lactis).